A 266-amino-acid polypeptide reads, in one-letter code: Prolactin-7A1 (266 aa).

The first 30 residues, 1–30 (MPLSFTQPCSSGALLLLVVSNLLLWENVAC), serve as a signal peptide directing secretion. 5 N-linked (GlcNAc...) asparagine glycosylation sites follow: Asn36, Asn58, Asn110, Asn149, and Asn157. 2 disulfides stabilise this stretch: Cys114-Cys231 and Cys248-Cys257.

It belongs to the somatotropin/prolactin family. In terms of tissue distribution, expressed specifically in the placenta. Detected only in the trophoblast giant cells.

The protein resides in the secreted. This chain is Prolactin-7A1 (Prl7a1), found in Mus musculus (Mouse).